Here is a 227-residue protein sequence, read N- to C-terminus: Cytochrome c oxidase subunit 2 (227 aa).

The Mitochondrial intermembrane portion of the chain corresponds to 1-14 (MTHPLQLGFQDATS). The chain crosses the membrane as a helical span at residues 15–45 (PIMEELLHFHDHTLMIVFLISSLVLYIITLM). Residues 46 to 59 (LTTKLTHTSTMDAQ) are Mitochondrial matrix-facing. The chain crosses the membrane as a helical span at residues 60-87 (EVETVWTILPAIILILIALPSLRILYMM). Residues 88 to 227 (DEINNPLLTV…YFEDWSVSMT (140 aa)) are Mitochondrial intermembrane-facing. Cu cation is bound by residues His161, Cys196, Glu198, Cys200, His204, and Met207. Glu198 contacts Mg(2+). Tyr218 carries the phosphotyrosine modification.

It belongs to the cytochrome c oxidase subunit 2 family. Component of the cytochrome c oxidase (complex IV, CIV), a multisubunit enzyme composed of 14 subunits. The complex is composed of a catalytic core of 3 subunits MT-CO1, MT-CO2 and MT-CO3, encoded in the mitochondrial DNA, and 11 supernumerary subunits COX4I, COX5A, COX5B, COX6A, COX6B, COX6C, COX7A, COX7B, COX7C, COX8 and NDUFA4, which are encoded in the nuclear genome. The complex exists as a monomer or a dimer and forms supercomplexes (SCs) in the inner mitochondrial membrane with NADH-ubiquinone oxidoreductase (complex I, CI) and ubiquinol-cytochrome c oxidoreductase (cytochrome b-c1 complex, complex III, CIII), resulting in different assemblies (supercomplex SCI(1)III(2)IV(1) and megacomplex MCI(2)III(2)IV(2)). Found in a complex with TMEM177, COA6, COX18, COX20, SCO1 and SCO2. Interacts with TMEM177 in a COX20-dependent manner. Interacts with COX20. Interacts with COX16. Requires Cu cation as cofactor.

It localises to the mitochondrion inner membrane. The enzyme catalyses 4 Fe(II)-[cytochrome c] + O2 + 8 H(+)(in) = 4 Fe(III)-[cytochrome c] + 2 H2O + 4 H(+)(out). Its function is as follows. Component of the cytochrome c oxidase, the last enzyme in the mitochondrial electron transport chain which drives oxidative phosphorylation. The respiratory chain contains 3 multisubunit complexes succinate dehydrogenase (complex II, CII), ubiquinol-cytochrome c oxidoreductase (cytochrome b-c1 complex, complex III, CIII) and cytochrome c oxidase (complex IV, CIV), that cooperate to transfer electrons derived from NADH and succinate to molecular oxygen, creating an electrochemical gradient over the inner membrane that drives transmembrane transport and the ATP synthase. Cytochrome c oxidase is the component of the respiratory chain that catalyzes the reduction of oxygen to water. Electrons originating from reduced cytochrome c in the intermembrane space (IMS) are transferred via the dinuclear copper A center (CU(A)) of subunit 2 and heme A of subunit 1 to the active site in subunit 1, a binuclear center (BNC) formed by heme A3 and copper B (CU(B)). The BNC reduces molecular oxygen to 2 water molecules using 4 electrons from cytochrome c in the IMS and 4 protons from the mitochondrial matrix. In Carlito syrichta (Philippine tarsier), this protein is Cytochrome c oxidase subunit 2 (MT-CO2).